The primary structure comprises 1899 residues: Protocadherin-15 (1899 aa).

Residues methionine 1 to alanine 26 form the signal peptide. The Extracellular portion of the chain corresponds to glutamine 27–alanine 1376. Cysteine 32 and cysteine 120 form a disulfide bridge. 11 consecutive Cadherin domains span residues glycine 38 to phenylalanine 147, glutamine 148 to phenylalanine 265, arginine 278 to phenylalanine 395, threonine 396 to phenylalanine 509, serine 510 to phenylalanine 616, proline 617 to phenylalanine 717, methionine 719 to phenylalanine 819, threonine 820 to phenylalanine 926, serine 927 to phenylalanine 1035, glutamine 1037 to phenylalanine 1144, and threonine 1145 to leucine 1259. The chain crosses the membrane as a helical span at residues leucine 1377 to valine 1397. At serine 1398–leucine 1899 the chain is on the cytoplasmic side. 3 disordered regions span residues serine 1668–proline 1687, histidine 1700–isoleucine 1721, and threonine 1734–leucine 1820. Composition is skewed to pro residues over residues leucine 1706–proline 1717 and proline 1743–leucine 1773. The span at proline 1774–serine 1791 shows a compositional bias: low complexity. The segment covering alanine 1804–proline 1814 has biased composition (pro residues).

In the utricle, localizes to the distal region of the kinocilium and near the tips of the stereocilia.

Its subcellular location is the cell membrane. In terms of biological role, calcium-dependent cell-adhesion protein. Required for inner ear neuroepithelial cell elaboration and cochlear function. Probably involved in the maintenance of normal retinal function. This is Protocadherin-15 (Pcdh15) from Gallus gallus (Chicken).